Here is an 88-residue protein sequence, read N- to C-terminus: Small ribosomal subunit protein bS20 (88 aa).

A disordered region spans residues 1 to 21; it reads MANTTSAKKATRKIARRTAVN.

This sequence belongs to the bacterial ribosomal protein bS20 family.

In terms of biological role, binds directly to 16S ribosomal RNA. The protein is Small ribosomal subunit protein bS20 of Agrobacterium fabrum (strain C58 / ATCC 33970) (Agrobacterium tumefaciens (strain C58)).